The following is a 233-amino-acid chain: N-(5'-phosphoribosyl)anthranilate isomerase (233 aa).

Belongs to the TrpF family.

The catalysed reaction is N-(5-phospho-beta-D-ribosyl)anthranilate = 1-(2-carboxyphenylamino)-1-deoxy-D-ribulose 5-phosphate. Its pathway is amino-acid biosynthesis; L-tryptophan biosynthesis; L-tryptophan from chorismate: step 3/5. The protein is N-(5'-phosphoribosyl)anthranilate isomerase of Ralstonia pickettii (strain 12J).